We begin with the raw amino-acid sequence, 301 residues long: GPN-loop GTPase 3 (301 aa).

Gly13 to Thr18 serves as a coordination point for GTP. The short motif at Gly70–Asn72 is the Gly-Pro-Asn (GPN)-loop; involved in dimer interface element. Ser176–Asp179 contacts GTP. Positions Ile212–Val232 are disordered. Residues Ser223–Val232 are compositionally biased toward basic and acidic residues.

It belongs to the GPN-loop GTPase family. Heterodimers with GPN1 or GPN2. Binds to RNA polymerase II (RNAPII).

Small GTPase required for proper nuclear import of RNA polymerase II and III (RNAPII and RNAPIII). May act at an RNAP assembly step prior to nuclear import. In Gibberella zeae (strain ATCC MYA-4620 / CBS 123657 / FGSC 9075 / NRRL 31084 / PH-1) (Wheat head blight fungus), this protein is GPN-loop GTPase 3.